Consider the following 635-residue polypeptide: Moesin/ezrin/radixin homolog 2 (635 aa).

An FERM domain is found at 12-305; it reads LSVRVSTFDS…GNHDLYMRRR (294 aa).

As to quaternary structure, interacts with Moe and arm at the adherens junction. Forms a complex with Kibra and Ex. Interacts (via FERM domain) with Sav (via FBM motif). Interacts with Schip1. In terms of tissue distribution, expressed predominantly in the germline. Expressed in the developing oocyte from stage 6 to the end of oogenesis and in the apical ends of follical cells from stage 10. Ubiquitous expression throughout embryogenesis with enhanced expression in mesoderm of early embryos and midgut of late embryos. In embryonic CNS, expression is seen in neuropil and developing brain and is enhanced in neuronal cell bodies. In embryonic PNS, expression is seen within the cell body. In third instar larvae, expression is uniform in the eye imaginal disk and is enhanced at the morphogenetic furrow. In pupal eyes, expression is seen in the cytoplasm of secondary and tertiary pigment cells, bristle precursor cells and rhabdomeres.

It is found in the cell junction. The protein localises to the adherens junction. Its subcellular location is the cell membrane. It localises to the cytoplasm. The protein resides in the cytoskeleton. It is found in the apical cell membrane. The protein localises to the cell projection. Its subcellular location is the rhabdomere. Regulator of the Hippo/SWH (Sav/Wts/Hpo) signaling pathway, a signaling pathway that plays a pivotal role in organ size control and tumor suppression by restricting proliferation and promoting apoptosis. The core of this pathway is composed of a kinase cascade wherein Hippo (Hpo), in complex with its regulatory protein Salvador (Sav), phosphorylates and activates Warts (Wts) in complex with its regulatory protein Mats, which in turn phosphorylates and inactivates the Yorkie (Yki) oncoprotein. Mer acts synergistically along with Ex and Kibra to regulate the Hippo signaling pathway. The protein is Moesin/ezrin/radixin homolog 2 (Mer) of Drosophila melanogaster (Fruit fly).